The chain runs to 174 residues: MAKVQAKMQGKAVGPEDGLREKMIAINRVTKVVKGGRILGFAALTVVGDGDGSVGMGKGKSKEVPAAVQKAMEEARRNMTKITLKNGSIHHKVMGQHGAASVMMAPAPKGTGIIAGGPMRAVFEVIGITDIVAKSHGSTNPYNMVRATLDALSHDRTPSEVAAKRGKTIEELFV.

The 64-residue stretch at 19–82 folds into the S5 DRBM domain; the sequence is LREKMIAINR…EEARRNMTKI (64 aa).

The protein belongs to the universal ribosomal protein uS5 family. As to quaternary structure, part of the 30S ribosomal subunit. Contacts proteins S4 and S8.

In terms of biological role, with S4 and S12 plays an important role in translational accuracy. Located at the back of the 30S subunit body where it stabilizes the conformation of the head with respect to the body. The sequence is that of Small ribosomal subunit protein uS5 from Albidiferax ferrireducens (strain ATCC BAA-621 / DSM 15236 / T118) (Rhodoferax ferrireducens).